A 394-amino-acid chain; its full sequence is Elongation factor Tu 1 (394 aa).

The region spanning 10–204 (KPHVNVGTIG…ALDSYIPEPQ (195 aa)) is the tr-type G domain. The segment at 19-26 (GHVDHGKT) is G1. A GTP-binding site is contributed by 19-26 (GHVDHGKT). Threonine 26 is a binding site for Mg(2+). Positions 60–64 (GITIN) are G2. The tract at residues 81–84 (DCPG) is G3. GTP-binding positions include 81–85 (DCPGH) and 136–139 (NKCD). The segment at 136–139 (NKCD) is G4. Residues 174–176 (SAL) form a G5 region.

Belongs to the TRAFAC class translation factor GTPase superfamily. Classic translation factor GTPase family. EF-Tu/EF-1A subfamily. Monomer.

Its subcellular location is the cytoplasm. It catalyses the reaction GTP + H2O = GDP + phosphate + H(+). In terms of biological role, GTP hydrolase that promotes the GTP-dependent binding of aminoacyl-tRNA to the A-site of ribosomes during protein biosynthesis. This chain is Elongation factor Tu 1, found in Shewanella baltica (strain OS195).